Here is a 346-residue protein sequence, read N- to C-terminus: Methionine import ATP-binding protein MetN 1 (346 aa).

Positions 2–241 (IELKNVSKVF…PQHVTTKKFV (240 aa)) constitute an ABC transporter domain. 38–45 (GYSGAGKS) is a binding site for ATP.

This sequence belongs to the ABC transporter superfamily. Methionine importer (TC 3.A.1.24) family. In terms of assembly, the complex is composed of two ATP-binding proteins (MetN), two transmembrane proteins (MetI) and a solute-binding protein (MetQ).

The protein localises to the cell membrane. The enzyme catalyses L-methionine(out) + ATP + H2O = L-methionine(in) + ADP + phosphate + H(+). It catalyses the reaction D-methionine(out) + ATP + H2O = D-methionine(in) + ADP + phosphate + H(+). Part of the ABC transporter complex MetNIQ involved in methionine import. Responsible for energy coupling to the transport system. This chain is Methionine import ATP-binding protein MetN 1, found in Bacillus cereus (strain ATCC 10987 / NRS 248).